The sequence spans 501 residues: MFSNQYIQQRIHKANSLREEGKNPYKNGLKRSLTNAAFLEKYAYVKGLEEPKDKEKCESVVGRVKLLRLMGKACFIKIEDESAILQAYVSQNELNDEFKSLKKHLEVGDIVLVKGFPFATKTGELSIHALEFHILSKTIVPLPEKFHGLSDIELRYRQRYLDLIVNPGVKDVFKKRSLIVSSVRKFFEMEGFLEVETPMMHPIPGGANARPFITYHNALEIERYLRIAPELYLKRLIVGGFEAVFEINRNFRNEGMDHSHNPEFTMIEFYWAYHTYEDLIELSKRLFDYLLKTLNLDSKIIYNDMEVDFNQTSVISYLDALETIGGISKGILEKEDRLLAYLLEQGIKVEPNLTHGKLLAEAFDHFVEHKLINPTFVTEYPIEISPLARRNDSNPNIADRFELFIAGKEIANGFSELNDPLDQLERFKNQVAEKEKGDEEAQYMDEDYVWALAHEMPPTAGQGIGIDRLVMLLTGAKSIKDVILFPAMRPVKNDFNVEGEE.

The Mg(2+) site is built by Glu-402 and Glu-409.

The protein belongs to the class-II aminoacyl-tRNA synthetase family. In terms of assembly, homodimer. Mg(2+) is required as a cofactor.

It localises to the cytoplasm. The catalysed reaction is tRNA(Lys) + L-lysine + ATP = L-lysyl-tRNA(Lys) + AMP + diphosphate. The chain is Lysine--tRNA ligase (lysS) from Helicobacter pylori (strain J99 / ATCC 700824) (Campylobacter pylori J99).